We begin with the raw amino-acid sequence, 364 residues long: 3-dehydroquinate synthase (364 aa).

NAD(+) is bound by residues 73 to 78 (DGEQNK), 107 to 111 (GVIGD), 131 to 132 (TT), lysine 144, lysine 153, and 171 to 174 (CLCT). Zn(2+) contacts are provided by glutamate 186, histidine 249, and histidine 266.

It belongs to the sugar phosphate cyclases superfamily. Dehydroquinate synthase family. NAD(+) serves as cofactor. The cofactor is Co(2+). It depends on Zn(2+) as a cofactor.

It localises to the cytoplasm. It catalyses the reaction 7-phospho-2-dehydro-3-deoxy-D-arabino-heptonate = 3-dehydroquinate + phosphate. It participates in metabolic intermediate biosynthesis; chorismate biosynthesis; chorismate from D-erythrose 4-phosphate and phosphoenolpyruvate: step 2/7. Its function is as follows. Catalyzes the conversion of 3-deoxy-D-arabino-heptulosonate 7-phosphate (DAHP) to dehydroquinate (DHQ). This chain is 3-dehydroquinate synthase, found in Blochmanniella floridana.